The following is a 49-amino-acid chain: MKRTYQPHNTRRARTHGFRARMATAGGRKVINNRRRKGRARLAPTIYKK.

The protein belongs to the bacterial ribosomal protein bL34 family.

In Sorangium cellulosum (strain So ce56) (Polyangium cellulosum (strain So ce56)), this protein is Large ribosomal subunit protein bL34.